The primary structure comprises 140 residues: Sex-regulated protein janus-B (140 aa).

Arginine 42 contacts substrate. The Proton acceptor role is filled by histidine 69. 110-112 (CKT) is a substrate binding site.

It belongs to the janus family.

JanA and janB regulate somatic sex differentiation. The polypeptide is Sex-regulated protein janus-B (janB) (Drosophila pseudoobscura pseudoobscura (Fruit fly)).